The sequence spans 468 residues: Cysteine--tRNA ligase (468 aa).

A Zn(2+)-binding site is contributed by cysteine 27. Positions 29-39 (PTVYDDAHLGH) match the 'HIGH' region motif. Residues cysteine 204, histidine 234, and glutamate 238 each coordinate Zn(2+). Residues 266 to 270 (KMSKS) carry the 'KMSKS' region motif. Lysine 269 is a binding site for ATP.

Belongs to the class-I aminoacyl-tRNA synthetase family. Monomer. It depends on Zn(2+) as a cofactor.

It is found in the cytoplasm. It catalyses the reaction tRNA(Cys) + L-cysteine + ATP = L-cysteinyl-tRNA(Cys) + AMP + diphosphate. The polypeptide is Cysteine--tRNA ligase (Campylobacter hominis (strain ATCC BAA-381 / DSM 21671 / CCUG 45161 / LMG 19568 / NCTC 13146 / CH001A)).